Reading from the N-terminus, the 216-residue chain is Ceramide-1-phosphate transfer protein (216 aa).

5 residues coordinate an N-acylsphingoid base 1-phosphate: aspartate 56, lysine 60, arginine 108, arginine 112, and histidine 152.

This sequence belongs to the GLTP family.

It is found in the cytoplasm. Its subcellular location is the cytosol. The protein resides in the golgi apparatus. It localises to the trans-Golgi network membrane. The protein localises to the cell membrane. It is found in the endosome membrane. Its subcellular location is the nucleus outer membrane. It carries out the reaction N-(hexadecanoyl)-sphing-4-enine-1-phosphate(in) = N-(hexadecanoyl)-sphing-4-enine-1-phosphate(out). It catalyses the reaction N-(9Z-octadecenoyl)-sphing-4-enine-1-phosphate(in) = N-(9Z-octadecenoyl)-sphing-4-enine-1-phosphate(out). In terms of biological role, mediates the intracellular transfer of ceramide-1-phosphate (C1P) between organelle membranes and the cell membrane. Required for normal structure of the Golgi stacks. Can bind phosphoceramides with a variety of aliphatic chains, but has a preference for lipids with saturated C16:0 or monounsaturated C18:1 aliphatic chains, and is inefficient with phosphoceramides containing lignoceryl (C24:0). Plays a role in the regulation of the cellular levels of ceramide-1-phosphate, and thereby contributes to the regulation of phospholipase PLA2G4A activity and the release of arachidonic acid. Has no activity with galactosylceramide, lactosylceramide, sphingomyelin, phosphatidylcholine, phosphatidic acid and ceramide. C1P transfer is stimulated by phosphatidylserine in C1P source vesicles. Regulates autophagy, inflammasome mediated IL1B and IL18 processing, and pyroptosis, but not apoptosis. In Mus musculus (Mouse), this protein is Ceramide-1-phosphate transfer protein.